A 386-amino-acid chain; its full sequence is 2,3,4,5-tetrahydropyridine-2,6-dicarboxylate N-succinyltransferase (386 aa).

Glu-257 serves as the catalytic Acyl-anhydride intermediate. Residues Arg-259, Gly-274, Ser-277, Ala-300, 315–316 (DA), Gly-323, Lys-349, and 362–365 (RQDS) each bind succinyl-CoA.

It belongs to the type 2 tetrahydrodipicolinate N-succinyltransferase family. Homotrimer.

The protein resides in the cytoplasm. It carries out the reaction (S)-2,3,4,5-tetrahydrodipicolinate + succinyl-CoA + H2O = (S)-2-succinylamino-6-oxoheptanedioate + CoA. The protein operates within amino-acid biosynthesis; L-lysine biosynthesis via DAP pathway; LL-2,6-diaminopimelate from (S)-tetrahydrodipicolinate (succinylase route): step 1/3. Its function is as follows. Catalyzes the conversion of the cyclic tetrahydrodipicolinate (THDP) into the acyclic N-succinyl-L-2-amino-6-oxopimelate using succinyl-CoA. In Campylobacter jejuni subsp. jejuni serotype O:2 (strain ATCC 700819 / NCTC 11168), this protein is 2,3,4,5-tetrahydropyridine-2,6-dicarboxylate N-succinyltransferase.